The following is a 99-amino-acid chain: Small ribosomal subunit protein bS20 (99 aa).

Belongs to the bacterial ribosomal protein bS20 family.

Its function is as follows. Binds directly to 16S ribosomal RNA. The protein is Small ribosomal subunit protein bS20 of Chlamydia pneumoniae (Chlamydophila pneumoniae).